The chain runs to 263 residues: Nucleoside triphosphate pyrophosphohydrolase (263 aa).

Residues 168–172 (KVYEE), glutamate 175, and 189–192 (KLEE) contribute to the ATP site. Glutamate 172 and glutamate 175 together coordinate Mg(2+). Residues glutamate 193 and aspartate 196 each contribute to the Mg(2+) site. ATP is bound by residues aspartate 196, 222–226 (KFERR), and tryptophan 253.

It belongs to the nucleoside triphosphate pyrophosphohydrolase family. As to quaternary structure, homodimer. Mg(2+) is required as a cofactor.

The catalysed reaction is ATP + H2O = AMP + diphosphate + H(+). In terms of biological role, involved in the regulation of bacterial cell survival under conditions of nutritional stress. Regulates the MazE-MazF toxin-antitoxin (TA) system that mediates programmed cell death (PCD). This is achieved by lowering the cellular concentration of (p)ppGpp produced by RelA under amino acid starvation, thus protecting the cell from the toxicity of MazF. Reduction of (p)ppGpp can be achieved by direct degradation of (p)ppGpp or by degradation of NTPs, which are substrates for (p)ppGpp synthesis by RelA. The sequence is that of Nucleoside triphosphate pyrophosphohydrolase (mazG) from Escherichia coli O157:H7.